The sequence spans 543 residues: CTP synthase (543 aa).

Residues 1-265 (MARYIFITGG…DDEVLAAFGI (265 aa)) form an amidoligase domain region. Position 13 (S13) interacts with CTP. S13 is a UTP binding site. 14-19 (SLGKGL) provides a ligand contact to ATP. Position 54 (Y54) interacts with L-glutamine. ATP is bound at residue D71. Mg(2+) is bound by residues D71 and E139. CTP is bound by residues 146 to 148 (DIE), 186 to 191 (KTKPTQ), and K222. Residues 186-191 (KTKPTQ) and K222 each bind UTP. 238–240 (RDV) is a binding site for ATP. A Glutamine amidotransferase type-1 domain is found at 291–542 (TIAIVGKYTG…IQAAVVQSRL (252 aa)). G353 serves as a coordination point for L-glutamine. The active-site Nucleophile; for glutamine hydrolysis is C380. Residues 381 to 384 (FGMQ), E404, and R470 contribute to the L-glutamine site. Residues H515 and E517 contribute to the active site.

The protein belongs to the CTP synthase family. Homotetramer.

It carries out the reaction UTP + L-glutamine + ATP + H2O = CTP + L-glutamate + ADP + phosphate + 2 H(+). The catalysed reaction is L-glutamine + H2O = L-glutamate + NH4(+). The enzyme catalyses UTP + NH4(+) + ATP = CTP + ADP + phosphate + 2 H(+). It participates in pyrimidine metabolism; CTP biosynthesis via de novo pathway; CTP from UDP: step 2/2. With respect to regulation, allosterically activated by GTP, when glutamine is the substrate; GTP has no effect on the reaction when ammonia is the substrate. The allosteric effector GTP functions by stabilizing the protein conformation that binds the tetrahedral intermediate(s) formed during glutamine hydrolysis. Inhibited by the product CTP, via allosteric rather than competitive inhibition. Functionally, catalyzes the ATP-dependent amination of UTP to CTP with either L-glutamine or ammonia as the source of nitrogen. Regulates intracellular CTP levels through interactions with the four ribonucleotide triphosphates. This chain is CTP synthase, found in Bradyrhizobium sp. (strain BTAi1 / ATCC BAA-1182).